The primary structure comprises 215 residues: Glycerol-3-phosphate acyltransferase (215 aa).

Helical transmembrane passes span 3–23, 42–61, 68–90, 110–130, 134–154, and 162–182; these read LILL…LWIG, TNTF…LIDI, TLLP…FAVL, AGVL…VFVL, LFSM…ISVL, and LLPS…AIII.

The protein belongs to the PlsY family. In terms of assembly, probably interacts with PlsX.

It is found in the cell membrane. The catalysed reaction is an acyl phosphate + sn-glycerol 3-phosphate = a 1-acyl-sn-glycero-3-phosphate + phosphate. The protein operates within lipid metabolism; phospholipid metabolism. Its function is as follows. Catalyzes the transfer of an acyl group from acyl-phosphate (acyl-PO(4)) to glycerol-3-phosphate (G3P) to form lysophosphatidic acid (LPA). This enzyme utilizes acyl-phosphate as fatty acyl donor, but not acyl-CoA or acyl-ACP. This chain is Glycerol-3-phosphate acyltransferase, found in Streptococcus equi subsp. equi (strain 4047).